The chain runs to 188 residues: Der GTPase-activating protein YihI (188 aa).

Disordered regions lie at residues 1-80 (MKQP…VPVP) and 162-188 (DEDD…KDTF). Residues 27–37 (TRDELDAEARD) are compositionally biased toward basic and acidic residues. Residues 47 to 57 (NRSGARTNVEG) are compositionally biased toward polar residues.

Belongs to the YihI family. Interacts with Der.

In terms of biological role, a GTPase-activating protein (GAP) that modifies Der/EngA GTPase function. May play a role in ribosome biogenesis. The protein is Der GTPase-activating protein YihI of Yersinia pseudotuberculosis serotype O:1b (strain IP 31758).